We begin with the raw amino-acid sequence, 433 residues long: 26S proteasome regulatory subunit 7 (433 aa).

The interval 1–23 (MPDYLGADQRKTKEEEKEDKPIR) is disordered. Basic and acidic residues predominate over residues 8–23 (DQRKTKEEEKEDKPIR). Residue 216 to 223 (GPPGTGKT) participates in ATP binding.

This sequence belongs to the AAA ATPase family. Post-translationally, phosphorylated. Dephosphorylated by ublcp1 which impairs psmc2 ATPase activity and disrupts 26S proteasome assembly.

It localises to the cytoplasm. It is found in the nucleus. Its function is as follows. The 26S proteasome is involved in the ATP-dependent degradation of ubiquitinated proteins. The regulatory (or ATPase) complex confers ATP dependency and substrate specificity to the 26S complex. This Xenopus laevis (African clawed frog) protein is 26S proteasome regulatory subunit 7 (psmc2).